The primary structure comprises 499 residues: Potassium voltage-gated channel subfamily A member 2 (499 aa).

Residues 1 to 27 are disordered; it reads MTVATGDLTDGSVGFAGHPQDSYDPEP. The tetramerization domain stretch occupies residues 1–125; the sequence is MTVATGDLTD…YELGEEAMEI (125 aa). Residues 1-160 lie on the Cytoplasmic side of the membrane; the sequence is MTVATGDLTD…LLFEYPESSG (160 aa). The chain crosses the membrane as a helical span at residues 161–182; it reads PARIIAIISVTVILISIVSFCL. The Extracellular portion of the chain corresponds to 183-221; the sequence is ETLPVFRDENEDMHGSGGNYYSYPNSTVRFQKSNTFTDP. N-linked (GlcNAc...) asparagine glycosylation is present at asparagine 207. A helical transmembrane segment spans residues 222 to 243; the sequence is FFIVETLCIIWFSFEFLVRFLA. A lipid anchor (S-palmitoyl cysteine) is attached at cysteine 244. Over 244 to 254 the chain is Cytoplasmic; it reads CPSKAVFFTNL. The chain crosses the membrane as a helical span at residues 255–275; that stretch reads MNIIDIVAIIPYFITLGTELA. The Extracellular segment spans residues 276-289; that stretch reads EKTEDGQQGQQAMS. Residues 290–310 form a helical; Voltage-sensor membrane-spanning segment; it reads LAILRVIRLVRVFRIFKLSRH. Topologically, residues 311 to 325 are cytoplasmic; it reads SKGLQILGQTLNASM. An S4-S5 linker region spans residues 312–325; sequence KGLQILGQTLNASM. A helical membrane pass occupies residues 326 to 347; the sequence is RELGLLIFFLFIGVILFSSAVF. The Extracellular segment spans residues 348 to 361; that stretch reads FAEADERDSQFPSI. The segment at residues 362 to 373 is an intramembrane region (helical); sequence PDAFWWAVVSMT. The Selectivity filter signature appears at 374–379; that stretch reads TVGYGD. Residues 374-381 lie within the membrane without spanning it; the sequence is TVGYGDMV. The Extracellular portion of the chain corresponds to 382 to 388; sequence PTTIGGK. A helical transmembrane segment spans residues 389 to 417; sequence IVGSLCAIAGVLTIALPVPVIVSNFNYFY. Residues 418–499 lie on the Cytoplasmic side of the membrane; the sequence is HRETEGEEQA…VNITKMLTDV (82 aa). The PDZ-binding motif lies at 497–499; the sequence is TDV.

Belongs to the potassium channel family. A (Shaker) (TC 1.A.1.2) subfamily. Kv1.2/KCNA2 sub-subfamily. As to quaternary structure, homotetramer and heterotetramer with other family members. Detected in tadpole brain and spinal cord.

It is found in the cell membrane. It catalyses the reaction K(+)(in) = K(+)(out). Its function is as follows. Voltage-gated potassium channel that mediates transmembrane potassium transport in excitable membranes, primarily in the brain and central nervous system. Prevents aberrant action potential firing and regulates neuronal output. Forms tetrameric potassium-selective channels through which potassium ions pass in accordance with their electrochemical gradient. The channel alternates between opened and closed conformations in response to the voltage difference across the membrane. Can form functional homotetrameric channels and heterotetrameric channels with other family members; the channels characteristics depend critically on the types of channel-forming alpha subunits that are present. Channel properties are modulated by cytoplasmic beta subunits that regulate the subcellular location of the alpha subunits. In vivo, membranes probably contain a mixture of heteromeric potassium channel complexes, making it difficult to assign currents observed in intact tissues to any particular potassium channel family member. Homotetrameric KCNA2 forms a delayed-rectifier potassium channel that opens in response to membrane depolarization, followed by slow spontaneous channel closure. Regulates neuronal excitability and plays a role as pacemaker in the regulation of neuronal action potentials. KCNA2-containing channels play a presynaptic role and prevent hyperexcitability and aberrant action potential firing. Response to toxins that are selective for KCNA2-containing potassium channels suggests that in Purkinje cells, dendritic subthreshold KCNA2-containing potassium channels prevent random spontaneous calcium spikes, suppressing dendritic hyperexcitability without hindering the generation of somatic action potentials, and thereby play an important role in motor coordination. Plays a role in the induction of long-term potentiation of neuron excitability in the CA3 layer of the hippocampus. The sequence is that of Potassium voltage-gated channel subfamily A member 2 (kcna2) from Xenopus laevis (African clawed frog).